Reading from the N-terminus, the 55-residue chain is Large ribosomal subunit protein bL33 (55 aa).

The protein belongs to the bacterial ribosomal protein bL33 family.

The polypeptide is Large ribosomal subunit protein bL33 (Dinoroseobacter shibae (strain DSM 16493 / NCIMB 14021 / DFL 12)).